An 85-amino-acid chain; its full sequence is Large ribosomal subunit protein bL27 (85 aa).

Positions 1–22 (MAHKKAGGSTRNGRDSESKRLG) are disordered.

Belongs to the bacterial ribosomal protein bL27 family.

This Vibrio parahaemolyticus serotype O3:K6 (strain RIMD 2210633) protein is Large ribosomal subunit protein bL27.